The sequence spans 79 residues: Acyl carrier protein (79 aa).

Positions 2–77 constitute a Carrier domain; sequence STIEERVKKI…QAIDYVKSHV (76 aa). Ser-37 bears the O-(pantetheine 4'-phosphoryl)serine mark.

It belongs to the acyl carrier protein (ACP) family. In terms of processing, 4'-phosphopantetheine is transferred from CoA to a specific serine of apo-ACP by AcpS. This modification is essential for activity because fatty acids are bound in thioester linkage to the sulfhydryl of the prosthetic group.

The protein resides in the cytoplasm. The protein operates within lipid metabolism; fatty acid biosynthesis. Functionally, carrier of the growing fatty acid chain in fatty acid biosynthesis. This Xanthomonas oryzae pv. oryzae (strain MAFF 311018) protein is Acyl carrier protein.